The chain runs to 434 residues: Double-stranded RNA-binding protein 2 (434 aa).

2 consecutive DRBM domains span residues Met-1–Asn-70 and Val-87–Gln-155. A disordered region spans residues Glu-402–Ile-434.

Heterodimer with DRB1 or DRB5. Interacts with DCL1 and DCL5.

It localises to the cytoplasm. Functionally, binds double-stranded RNA. May be involved in RNA-mediated silencing. The polypeptide is Double-stranded RNA-binding protein 2 (DRB2) (Arabidopsis thaliana (Mouse-ear cress)).